Reading from the N-terminus, the 465-residue chain is Methionine aminopeptidase 2-2 (465 aa).

Basic residues predominate over residues 1–11 (MGSKTPHNHRR). The interval 1–89 (MGSKTPHNHR…KKKKNTKELE (89 aa)) is disordered. Acidic residues predominate over residues 43–54 (GESEGGEDEDDD). A compositionally biased stretch (basic residues) spans 73–84 (RNKRKKKKKKKN). His-217 lines the substrate pocket. Residues Asp-238, Asp-249, and His-318 each contribute to the a divalent metal cation site. Position 326 (His-326) interacts with substrate. Positions 351 and 446 each coordinate a divalent metal cation.

The protein belongs to the peptidase M24A family. Methionine aminopeptidase eukaryotic type 2 subfamily. It depends on Co(2+) as a cofactor. Zn(2+) serves as cofactor. Mn(2+) is required as a cofactor. The cofactor is Fe(2+).

It is found in the cytoplasm. The catalysed reaction is Release of N-terminal amino acids, preferentially methionine, from peptides and arylamides.. Cotranslationally removes the N-terminal methionine from nascent proteins. The N-terminal methionine is often cleaved when the second residue in the primary sequence is small and uncharged (Met-Ala-, Cys, Gly, Pro, Ser, Thr, or Val). This is Methionine aminopeptidase 2-2 from Ajellomyces capsulatus (strain G186AR / H82 / ATCC MYA-2454 / RMSCC 2432) (Darling's disease fungus).